We begin with the raw amino-acid sequence, 49 residues long: uncharacterized protein (49 aa).

Residues Met1 to Met22 form the signal peptide.

It is found in the secreted. This is an uncharacterized protein from Dictyostelium discoideum (Social amoeba).